Here is a 508-residue protein sequence, read N- to C-terminus: ATP synthase subunit alpha (508 aa).

Position 170-177 (170-177) interacts with ATP; sequence GDRQTGKT.

It belongs to the ATPase alpha/beta chains family. In terms of assembly, F-type ATPases have 2 components, CF(1) - the catalytic core - and CF(0) - the membrane proton channel. CF(1) has five subunits: alpha(3), beta(3), gamma(1), delta(1), epsilon(1). CF(0) has three main subunits: a(1), b(2) and c(9-12). The alpha and beta chains form an alternating ring which encloses part of the gamma chain. CF(1) is attached to CF(0) by a central stalk formed by the gamma and epsilon chains, while a peripheral stalk is formed by the delta and b chains.

It localises to the cell inner membrane. It carries out the reaction ATP + H2O + 4 H(+)(in) = ADP + phosphate + 5 H(+)(out). Its function is as follows. Produces ATP from ADP in the presence of a proton gradient across the membrane. The alpha chain is a regulatory subunit. This is ATP synthase subunit alpha from Dictyoglomus turgidum (strain DSM 6724 / Z-1310).